We begin with the raw amino-acid sequence, 609 residues long: Zinc metalloproteinase-disintegrin-like VMP-III (609 aa).

The signal sequence occupies residues 1–20 (MIQVLLVTICLAAFPYQGSS). A propeptide spanning residues 21–189 (IILESGNVND…KKASQLVVTA (169 aa)) is cleaved from the precursor. One can recognise a Peptidase M12B domain in the interval 198 to 393 (RFVELFLVVD…HNPECILNEP (196 aa)). Positions 201 and 285 each coordinate Ca(2+). 3 disulfide bridges follow: Cys-308-Cys-388, Cys-348-Cys-372, and Cys-350-Cys-355. A Zn(2+)-binding site is contributed by His-333. Glu-334 is an active-site residue. Zn(2+)-binding residues include His-337 and His-343. N-linked (GlcNAc...) asparagine glycosylation occurs at Asn-371. Residues Cys-388, Asn-391, Val-403, Asn-406, Leu-408, Glu-410, Glu-413, and Asp-416 each contribute to the Ca(2+) site. In terms of domain architecture, Disintegrin spans 401–487 (PPVCGNELLE…ECPADVFHKN (87 aa)). Cystine bridges form between Cys-404/Cys-433, Cys-415/Cys-428, Cys-417/Cys-423, Cys-427/Cys-450, Cys-441/Cys-447, Cys-446/Cys-472, Cys-459/Cys-479, Cys-466/Cys-498, Cys-491/Cys-503, Cys-510/Cys-560, Cys-525/Cys-571, Cys-538/Cys-548, Cys-555/Cys-597, and Cys-591/Cys-602. The D/ECD-tripeptide signature appears at 465–467 (ECD). The Ca(2+) site is built by Asp-467, Pro-468, Glu-470, Asp-482, and Val-483.

This sequence belongs to the venom metalloproteinase (M12B) family. P-III subfamily. P-IIIa sub-subfamily. Monomer. The cofactor is Zn(2+). In terms of tissue distribution, expressed by the venom gland.

It localises to the secreted. In terms of biological role, snake venom metalloproteinase that impairs hemostasis in the envenomed animal. The polypeptide is Zinc metalloproteinase-disintegrin-like VMP-III (Crotalus viridis viridis (Prairie rattlesnake)).